The following is a 212-amino-acid chain: uncharacterized protein (212 aa).

Residues M1–A20 form the signal peptide.

The protein localises to the virion. This is an uncharacterized protein from Acanthamoeba polyphaga (Amoeba).